Reading from the N-terminus, the 155-residue chain is uncharacterized protein (155 aa).

A run of 2 helical transmembrane segments spans residues isoleucine 33 to leucine 53 and isoleucine 83 to valine 103.

It to E.coli YdgK.

It localises to the cell membrane. This is an uncharacterized protein from Synechocystis sp. (strain ATCC 27184 / PCC 6803 / Kazusa).